Reading from the N-terminus, the 201-residue chain is Casparian strip membrane protein 2 (201 aa).

Residues 1–38 are Cytoplasmic-facing; sequence MKSTGEATAINIGETKSASATTVATTKAIQHPKAGLKR. A helical transmembrane segment spans residues 39–59; sequence GLAIFDFILRLSAIGAALAAT. The Extracellular portion of the chain corresponds to 60–89; sequence TTMGTTDQTLPFFTQFFQFQASYDDLPAFS. Residues 90 to 110 traverse the membrane as a helical segment; it reads FFVIANAIASGYLFLSLPFSI. Residues 111–129 lie on the Cytoplasmic side of the membrane; sequence VCIVRPHAMGARLLLVICD. The chain crosses the membrane as a helical span at residues 130-150; that stretch reads TVMVALTIAAAAAAAAIVYLA. The Extracellular portion of the chain corresponds to 151–175; sequence HNGNSNANWVAICQQFDDFCQSVSG. A helical membrane pass occupies residues 176–196; the sequence is AVVASFIAAVLFMLMIVLSAF. Topologically, residues 197-201 are cytoplasmic; it reads SLRKH.

The protein belongs to the Casparian strip membrane proteins (CASP) family. Homodimer and heterodimers.

Its subcellular location is the cell membrane. Regulates membrane-cell wall junctions and localized cell wall deposition. Required for establishment of the Casparian strip membrane domain (CSD) and the subsequent formation of Casparian strips, a cell wall modification of the root endodermis that determines an apoplastic barrier between the intraorganismal apoplasm and the extraorganismal apoplasm and prevents lateral diffusion. This chain is Casparian strip membrane protein 2, found in Vitis vinifera (Grape).